We begin with the raw amino-acid sequence, 222 residues long: Putative germin-like protein 3-2 (222 aa).

The N-terminal stretch at 1 to 22 is a signal peptide; it reads MAKLILATFAVVFLALAATSLA. Cys-32 and Cys-50 are oxidised to a cystine. N-linked (GlcNAc...) asparagine glycans are attached at residues Asn-55 and Asn-71. Residues 64–212 form the Cupin type-1 domain; the sequence is DGLTNAGNTT…AFQVDGGMVE (149 aa). Positions 112, 114, 119, and 158 each coordinate Mn(2+). A glycan (N-linked (GlcNAc...) asparagine) is linked at Asn-165.

It belongs to the germin family. Oligomer (believed to be a pentamer but probably hexamer).

It localises to the secreted. It is found in the extracellular space. The protein resides in the apoplast. May play a role in plant defense. Probably has no oxalate oxidase activity even if the active site is conserved. The chain is Putative germin-like protein 3-2 from Oryza sativa subsp. japonica (Rice).